A 176-amino-acid polypeptide reads, in one-letter code: Probable Brix domain-containing ribosomal biogenesis protein (176 aa).

The 171-residue stretch at 6–176 folds into the Brix domain; sequence IEIVFTSSRD…QLYDRNKNIN (171 aa).

Its function is as follows. Probably involved in the biogenesis of the ribosome. The chain is Probable Brix domain-containing ribosomal biogenesis protein from Sulfurisphaera tokodaii (strain DSM 16993 / JCM 10545 / NBRC 100140 / 7) (Sulfolobus tokodaii).